Here is a 126-residue protein sequence, read N- to C-terminus: MSWQTYVDTNLVGTGAVTQAAIIGHDGNTWATSAGFAVSPANGAALANAFKDATAIRSNGFELAGTRYVTIRADDRSVYGKKGSAGVITVKTSKAILIGVYNEKIQPGTAANVVEKLADYLIGQGF.

Serine 2 is modified (blocked amino end (Ser)). Position 104 is an N6,N6,N6-trimethyllysine (lysine 104).

Belongs to the profilin family. In terms of assembly, occurs in many kinds of cells as a complex with monomeric actin in a 1:1 ratio.

Its subcellular location is the cytoplasm. It localises to the cytoskeleton. Functionally, binds to actin and affects the structure of the cytoskeleton. At high concentrations, profilin prevents the polymerization of actin, whereas it enhances it at low concentrations. By binding to PIP2, it inhibits the formation of IP3 and DG. This is Profilin-2 from Acanthamoeba castellanii (Amoeba).